The following is a 123-amino-acid chain: KxDL motif-containing protein LO9-177 (123 aa).

The KxDL motif lies at 78–81 (KDDL).

It belongs to the KXD1 family. As to quaternary structure, homodimer. Component of a nuclear cell elongation controlling complex made of ILI5/BUL1, LO9-177 and BC1. Binds directly to ILI5/BUL1, ILI4/BU1, BUL2 and BUL3. Binds to BC1 in the nucleus. Interacts with BCL1.

The protein localises to the nucleus. It is found in the cytoplasm. Its function is as follows. Contributes, together with ILI5/BUL1 and BC1, to the promotion of leaf inclination and grain size by modulating cell elongation. The protein is KxDL motif-containing protein LO9-177 of Oryza sativa subsp. indica (Rice).